Consider the following 198-residue polypeptide: V-type proton ATPase subunit E (198 aa).

It belongs to the V-ATPase E subunit family.

In terms of biological role, produces ATP from ADP in the presence of a proton gradient across the membrane. The chain is V-type proton ATPase subunit E from Borrelia hermsii (strain HS1 / DAH).